The primary structure comprises 769 residues: DNA gyrase subunit B (769 aa).

The 115-residue stretch at 414 to 528 (SEIYLVEGDS…NGHIYLAQPP (115 aa)) folds into the Toprim domain. The Mg(2+) site is built by Glu420, Asp493, and Asp495.

The protein belongs to the type II topoisomerase GyrB family. As to quaternary structure, heterotetramer, composed of two GyrA and two GyrB chains. In the heterotetramer, GyrA contains the active site tyrosine that forms a transient covalent intermediate with DNA, while GyrB binds cofactors and catalyzes ATP hydrolysis. Mg(2+) serves as cofactor. The cofactor is Mn(2+). Requires Ca(2+) as cofactor.

The protein localises to the cytoplasm. It catalyses the reaction ATP-dependent breakage, passage and rejoining of double-stranded DNA.. In terms of biological role, a type II topoisomerase that negatively supercoils closed circular double-stranded (ds) DNA in an ATP-dependent manner to modulate DNA topology and maintain chromosomes in an underwound state. Negative supercoiling favors strand separation, and DNA replication, transcription, recombination and repair, all of which involve strand separation. Also able to catalyze the interconversion of other topological isomers of dsDNA rings, including catenanes and knotted rings. Type II topoisomerases break and join 2 DNA strands simultaneously in an ATP-dependent manner. This Campylobacter jejuni subsp. jejuni serotype O:2 (strain ATCC 700819 / NCTC 11168) protein is DNA gyrase subunit B.